The chain runs to 371 residues: Anhydro-N-acetylmuramic acid kinase (371 aa).

10–17 serves as a coordination point for ATP; it reads GTSLDGID.

This sequence belongs to the anhydro-N-acetylmuramic acid kinase family.

The catalysed reaction is 1,6-anhydro-N-acetyl-beta-muramate + ATP + H2O = N-acetyl-D-muramate 6-phosphate + ADP + H(+). Its pathway is amino-sugar metabolism; 1,6-anhydro-N-acetylmuramate degradation. It functions in the pathway cell wall biogenesis; peptidoglycan recycling. Catalyzes the specific phosphorylation of 1,6-anhydro-N-acetylmuramic acid (anhMurNAc) with the simultaneous cleavage of the 1,6-anhydro ring, generating MurNAc-6-P. Is required for the utilization of anhMurNAc either imported from the medium or derived from its own cell wall murein, and thus plays a role in cell wall recycling. This is Anhydro-N-acetylmuramic acid kinase from Chromohalobacter salexigens (strain ATCC BAA-138 / DSM 3043 / CIP 106854 / NCIMB 13768 / 1H11).